Here is a 130-residue protein sequence, read N- to C-terminus: Small ribosomal subunit protein uS8z/uS8w (130 aa).

Belongs to the universal ribosomal protein uS8 family.

It is found in the cytoplasm. The chain is Small ribosomal subunit protein uS8z/uS8w (RPS15AA) from Arabidopsis thaliana (Mouse-ear cress).